A 53-amino-acid chain; its full sequence is Antitoxin RelB3 (53 aa).

In terms of assembly, forms heterodimers with RelE and possibly a heterotetramer RelE3-RelB3(2)-RelE3 from 2 heterodimers. The heterotetramer is probably not very stable in solution.

Its function is as follows. Antitoxin component of a type II toxin-antitoxin (TA) system. Probably neutralizes the toxic activity of cognate toxin RelE. This chain is Antitoxin RelB3 (relB3), found in Methanocaldococcus jannaschii (strain ATCC 43067 / DSM 2661 / JAL-1 / JCM 10045 / NBRC 100440) (Methanococcus jannaschii).